Consider the following 172-residue polypeptide: Ribosome maturation factor RimM (172 aa).

One can recognise a PRC barrel domain in the interval 98 to 171; it reads PGEYYYHQIV…KVIVELMEGL (74 aa).

It belongs to the RimM family. In terms of assembly, binds ribosomal protein uS19.

The protein resides in the cytoplasm. Functionally, an accessory protein needed during the final step in the assembly of 30S ribosomal subunit, possibly for assembly of the head region. Essential for efficient processing of 16S rRNA. May be needed both before and after RbfA during the maturation of 16S rRNA. It has affinity for free ribosomal 30S subunits but not for 70S ribosomes. This Levilactobacillus brevis (strain ATCC 367 / BCRC 12310 / CIP 105137 / JCM 1170 / LMG 11437 / NCIMB 947 / NCTC 947) (Lactobacillus brevis) protein is Ribosome maturation factor RimM.